Reading from the N-terminus, the 191-residue chain is Protein GrpE (191 aa).

This sequence belongs to the GrpE family. As to quaternary structure, homodimer.

The protein localises to the cytoplasm. Functionally, participates actively in the response to hyperosmotic and heat shock by preventing the aggregation of stress-denatured proteins, in association with DnaK and GrpE. It is the nucleotide exchange factor for DnaK and may function as a thermosensor. Unfolded proteins bind initially to DnaJ; upon interaction with the DnaJ-bound protein, DnaK hydrolyzes its bound ATP, resulting in the formation of a stable complex. GrpE releases ADP from DnaK; ATP binding to DnaK triggers the release of the substrate protein, thus completing the reaction cycle. Several rounds of ATP-dependent interactions between DnaJ, DnaK and GrpE are required for fully efficient folding. This is Protein GrpE from Listeria monocytogenes serotype 1/2a (strain 10403S).